Here is a 153-residue protein sequence, read N- to C-terminus: D-aminoacyl-tRNA deacylase (153 aa).

The short motif at 137-138 is the Gly-cisPro motif, important for rejection of L-amino acids element; the sequence is GP.

Belongs to the DTD family. Homodimer.

Its subcellular location is the cytoplasm. It carries out the reaction glycyl-tRNA(Ala) + H2O = tRNA(Ala) + glycine + H(+). The catalysed reaction is a D-aminoacyl-tRNA + H2O = a tRNA + a D-alpha-amino acid + H(+). Functionally, an aminoacyl-tRNA editing enzyme that deacylates mischarged D-aminoacyl-tRNAs. Also deacylates mischarged glycyl-tRNA(Ala), protecting cells against glycine mischarging by AlaRS. Acts via tRNA-based rather than protein-based catalysis; rejects L-amino acids rather than detecting D-amino acids in the active site. By recycling D-aminoacyl-tRNA to D-amino acids and free tRNA molecules, this enzyme counteracts the toxicity associated with the formation of D-aminoacyl-tRNA entities in vivo and helps enforce protein L-homochirality. The protein is D-aminoacyl-tRNA deacylase of Herpetosiphon aurantiacus (strain ATCC 23779 / DSM 785 / 114-95).